We begin with the raw amino-acid sequence, 244 residues long: rRNA adenine N-6-methyltransferase (244 aa).

Positions 11, 13, 38, 59, 84, and 101 each coordinate S-adenosyl-L-methionine.

Belongs to the class I-like SAM-binding methyltransferase superfamily. rRNA adenine N(6)-methyltransferase family.

It catalyses the reaction adenosine(2085) in 23S rRNA + 2 S-adenosyl-L-methionine = N(6)-dimethyladenosine(2085) in 23S rRNA + 2 S-adenosyl-L-homocysteine + 2 H(+). Functionally, this protein produces a dimethylation of the adenine residue at position 2085 in 23S rRNA, resulting in reduced affinity between ribosomes and macrolide-lincosamide-streptogramin B antibiotics. In Bacillus subtilis, this protein is rRNA adenine N-6-methyltransferase (ermC').